We begin with the raw amino-acid sequence, 256 residues long: MRLFLALLALGFAAVAAVPANPQRIVGGSTTTIQQYPTIVALLFSRNGNTFFQACGGTILNNRNVLTAAHCPHGDAVNRWRVRSGSTFANSGGAVHNLNSVRIHPNYNRRNLDNDIAIMRTASNIAFNNAAQPARIAGANYNLGDNQVVWAAGWGAIRSGGPSSEQLRHVQVWTVNQATCRSRYASIGRTVTDNMLCSGWLDVGGRDQCQGDSGGPLYHNGVVVGVCSWGEECALARFPGVNARVTRYTSWISNNS.

Positions 1-17 are cleaved as a signal peptide; it reads MRLFLALLALGFAAVAA. A propeptide spans 18-24 (activation peptide); sequence VPANPQR. A Peptidase S1 domain is found at 25-256; that stretch reads IVGGSTTTIQ…RYTSWISNNS (232 aa). Cysteine 55 and cysteine 71 are oxidised to a cystine. Active-site charge relay system residues include histidine 70 and aspartate 115. 2 disulfides stabilise this stretch: cysteine 180/cysteine 197 and cysteine 209/cysteine 233. Residue serine 213 is the Charge relay system of the active site.

It belongs to the peptidase S1 family. In terms of tissue distribution, midgut.

The protein localises to the secreted. It localises to the extracellular space. The catalysed reaction is Preferential cleavage: Arg-|-Xaa, Lys-|-Xaa.. The sequence is that of Trypsin, alkaline C from Manduca sexta (Tobacco hawkmoth).